We begin with the raw amino-acid sequence, 444 residues long: MKNLDINTFDNIEDIPLGSSEQDPYDFFTLSDRNVMNSDMKKNIVQWNSRYSYNQLKNKDSLIMFLVEIFRSLFVSNCIDKNIDNVLLSIEEMFIDHYYNPQHSRLKYLIDDVGIFFTKLPITKAFHTYNKKYRITKRLYAPPTFNEVRHILNLAQILSLEEGLDLLTFDADETLYPDGHDFNDEVLASYISCLLKKMNIAIVTAASYNNDAEKYQKRLENLLKYFSKHNIKDGSYKNFYVMGGESNYLFKCNEEATLYSVPENEWRHYKKFVDYDTVQEILNISEKCLEKVIKDFGLCAQIQRKEKSIGLVPNKIPSLNIKNEQKNYMIKYEVLEEAVIRIKKEIIKNKITAPYCAFNGGQDLWVDVGNKAEGLLILQKLLKIQKKKCCHIGDQFLHSGNDFPTRFCSLTLWVSNPQETKACLKSIMHLNIKSFIPEVLYENQ.

2 residues coordinate ATP: K132 and H150. The Nucleophile role is filled by D170. The IMP site is built by D170, D172, D178, T204, S207, S308, D363, and K371. Mg(2+)-binding residues include D170 and D172. D172 acts as the Proton donor in catalysis. D394 contacts Mg(2+).

The protein belongs to the ISN1 family. Homotetramer. The cofactor is Mg(2+).

The protein resides in the cytoplasm. The enzyme catalyses IMP + H2O = inosine + phosphate. At physiological pH, allosterically activated by ATP. ATP binding is a prerequisite to magnesium and substrate binding. ATP binds to 2 of the subunits in the homotetramer inducing a closure of these 2 subunits and the release of the C-terminal loop, thereby activating the enzyme. In this conformation, the enzyme can bind IMP and magnesium which ultimately leads to the release of ATP. At pH 5, ATP does not have an allosteric role and is dispensable for magnesium and substrate binding. Inhibited by phosphocholine and D-myo-inositol-4-phosphate. Specifically, catalyzes the dephosphorylation of inosine monophosphate (IMP) into inosine. By dephosphorylating IMP, plays a role in the purine salvage pathway. Does not have phosphotransferase activity with IMP as phosphate donor and adenosine as phosphate acceptor. The chain is IMP-specific 5'-nucleotidase 1 from Plasmodium falciparum (isolate 3D7).